A 401-amino-acid chain; its full sequence is Transcription factor atf-2 (401 aa).

Residues 19 to 38 (SASAEFSSSSSDSSNFSEGS) are compositionally biased toward low complexity. A disordered region spans residues 19-78 (SASAEFSSSSSDSSNFSEGSPPESRRNSVNESVIKDEHYWERRRRNNDASRRSREKRRQN). Residues 41–78 (ESRRNSVNESVIKDEHYWERRRRNNDASRRSREKRRQN) are compositionally biased toward basic and acidic residues. The bZIP 1 domain maps to 54–100 (DEHYWERRRRNNDASRRSREKRRQNDLAMEEKIMLLSAENERLKSQL). A basic motif 1 region spans residues 60–85 (RRRRNNDASRRSREKRRQNDLAMEEK). The interval 89–96 (LSAENERL) is leucine-zipper 1. Residues 181-211 (SASSLFSSSSSSAFHPFRPSESAQQSFPSSS) are compositionally biased toward low complexity. Disordered regions lie at residues 181-256 (SASS…PQPV) and 273-345 (QRRP…AAKR). Polar residues-rich tracts occupy residues 222 to 256 (DSST…PQPV) and 273 to 283 (QRRPSPTVPQS). A compositionally biased stretch (low complexity) spans 305–317 (ESVSSSASFSPSH). Residues 329–392 (SPQYVDRRRR…AHFKSVLAQR (64 aa)) enclose the bZIP 2 domain. The interval 335–360 (RRRRNNEAAKRCRANRRAVFEYRSRR) is basic motif 2. The stretch at 361–388 (VQLLEGENEDLRTQIETLKAEIAHFKSV) forms a coiled coil. A leucine-zipper 2 region spans residues 364 to 378 (LEGENEDLRTQIETL).

This sequence belongs to the bZIP family. Interacts with cell death specification protein ces-2. Post-translationally, phosphorylated by mitogen-activated protein kinases pmk-2 and pmk-3. May be responsive to osmotic stress.

The protein resides in the nucleus. Its function is as follows. Acts as a transcription factor that recognizes and binds to the sequence 5'-[GA]TTA[CT]GTAA[CT]-3', a sequence present in many promoters. Involved in the development of the excretory duct cell, by positively modulating embryonic transcription of putative transcription factor lin-48, acting in concert with cell death specification protein ces-2. Negatively modulates expression of key autophagy-related genes, bec-1/ATG6 and lgg-1/ATG8, and may link together autophagy and apoptosis during development. Positively modulates expression of neuropeptide pigment dispersing factor homologs pdf-1 and pdf-2. The protein is Transcription factor atf-2 of Caenorhabditis elegans.